We begin with the raw amino-acid sequence, 329 residues long: Mitochondrial nuclease (329 aa).

The active-site Proton acceptor is His138. Asn170 is a Mg(2+) binding site.

Belongs to the DNA/RNA non-specific endonuclease family. In terms of assembly, homodimer. It depends on Mn(2+) as a cofactor. Requires Mg(2+) as cofactor.

The protein localises to the mitochondrion inner membrane. Its function is as follows. This enzyme has both RNase and DNase activity. This chain is Mitochondrial nuclease (NUC1), found in Saccharomyces cerevisiae (strain ATCC 204508 / S288c) (Baker's yeast).